The following is a 70-amino-acid chain: Cold shock-like protein CspH (70 aa).

The 61-residue stretch at 7-67 folds into the CSD domain; it reads GIVKTFDCKS…GLRGPTAANV (61 aa).

It is found in the cytoplasm. The protein is Cold shock-like protein CspH (cspH) of Salmonella typhi.